Here is a 361-residue protein sequence, read N- to C-terminus: POU domain, class 3, transcription factor 4 (361 aa).

Disordered stretches follow at residues 99–131 and 144–192; these read PHVA…GQPL and MLEH…PTSD. A compositionally biased stretch (polar residues) spans 119–131; the sequence is APNSSITSSGQPL. The segment covering 165 to 183 has biased composition (basic and acidic residues); sequence VLREPPDHGELGSHHCQDH. Residues 186–260 enclose the POU-specific domain; the sequence is EETPTSDELE…LLNKWLEEAD (75 aa). The residue at position 265 (serine 265) is a Phosphoserine. The segment at residues 278-337 is a DNA-binding region (homeobox); that stretch reads KRKKRTSIEVSVKGVLETHFLKCPKPAAQEISSLADSLQLEKEVVRVWFCNRRQKEKRMT. Residues 334–361 are disordered; sequence KRMTPPGDQQPHEVYSHTVKTDASCHDL. A compositionally biased stretch (basic and acidic residues) spans 343–361; the sequence is QPHEVYSHTVKTDASCHDL.

The protein belongs to the POU transcription factor family. Class-3 subfamily. In terms of assembly, interacts with HNRNPU. As to expression, brain specific.

Its subcellular location is the nucleus. In terms of biological role, probable transcription factor which exert its primary action widely during early neural development and in a very limited set of neurons in the mature brain. In Mus musculus (Mouse), this protein is POU domain, class 3, transcription factor 4 (Pou3f4).